The chain runs to 766 residues: Phosphoribosylformylglycinamidine synthase subunit PurL (766 aa).

The active site involves His66. 2 residues coordinate ATP: Tyr69 and Lys113. Glu115 provides a ligand contact to Mg(2+). Substrate is bound by residues 116-119 and Arg138; that span reads SHNH. His117 functions as the Proton acceptor in the catalytic mechanism. Asp139 serves as a coordination point for Mg(2+). Gln264 serves as a coordination point for substrate. Asp292 provides a ligand contact to Mg(2+). Residue 336–338 coordinates substrate; that stretch reads ESQ. ATP contacts are provided by Asn524 and Gly561. Asn562 contributes to the Mg(2+) binding site. Substrate is bound at residue Ser564.

The protein belongs to the FGAMS family. In terms of assembly, monomer. Part of the FGAM synthase complex composed of 1 PurL, 1 PurQ and 2 PurS subunits.

It is found in the cytoplasm. The enzyme catalyses N(2)-formyl-N(1)-(5-phospho-beta-D-ribosyl)glycinamide + L-glutamine + ATP + H2O = 2-formamido-N(1)-(5-O-phospho-beta-D-ribosyl)acetamidine + L-glutamate + ADP + phosphate + H(+). It participates in purine metabolism; IMP biosynthesis via de novo pathway; 5-amino-1-(5-phospho-D-ribosyl)imidazole from N(2)-formyl-N(1)-(5-phospho-D-ribosyl)glycinamide: step 1/2. Functionally, part of the phosphoribosylformylglycinamidine synthase complex involved in the purines biosynthetic pathway. Catalyzes the ATP-dependent conversion of formylglycinamide ribonucleotide (FGAR) and glutamine to yield formylglycinamidine ribonucleotide (FGAM) and glutamate. The FGAM synthase complex is composed of three subunits. PurQ produces an ammonia molecule by converting glutamine to glutamate. PurL transfers the ammonia molecule to FGAR to form FGAM in an ATP-dependent manner. PurS interacts with PurQ and PurL and is thought to assist in the transfer of the ammonia molecule from PurQ to PurL. This Mycobacterium tuberculosis (strain CDC 1551 / Oshkosh) protein is Phosphoribosylformylglycinamidine synthase subunit PurL.